Here is a 208-residue protein sequence, read N- to C-terminus: Uracil phosphoribosyltransferase (208 aa).

5-phospho-alpha-D-ribose 1-diphosphate is bound by residues Arg78, Arg103, and 130 to 138 (DPMLATGGT). Residues Ile193 and 198 to 200 (GDA) each bind uracil. Asp199 is a 5-phospho-alpha-D-ribose 1-diphosphate binding site.

The protein belongs to the UPRTase family. It depends on Mg(2+) as a cofactor.

It carries out the reaction UMP + diphosphate = 5-phospho-alpha-D-ribose 1-diphosphate + uracil. The protein operates within pyrimidine metabolism; UMP biosynthesis via salvage pathway; UMP from uracil: step 1/1. Allosterically activated by GTP. Functionally, catalyzes the conversion of uracil and 5-phospho-alpha-D-ribose 1-diphosphate (PRPP) to UMP and diphosphate. This Nitratidesulfovibrio vulgaris (strain DSM 19637 / Miyazaki F) (Desulfovibrio vulgaris) protein is Uracil phosphoribosyltransferase.